The chain runs to 301 residues: Lycopene elongase/hydratase (301 aa).

A disordered region spans residues 1–20 (MSADMAAQSESGEGGDDGRA). Transmembrane regions (helical) follow at residues 39–59 (FWLY…SALA), 61–81 (LFGL…NVFL), 110–130 (PVNT…FAVA), 133–153 (VAWP…APPF), 160–180 (LLDS…YAAV), 186–206 (PMLA…FSAI), 229–249 (TYWY…AVDL), 252–272 (GALL…GVDV), and 276–296 (YWWY…GALW).

The protein belongs to the UbiA prenyltransferase family.

The protein resides in the cell membrane. The catalysed reaction is all-trans-lycopene + dimethylallyl diphosphate + H2O = dihydroisopentenyldehydrorhodopin + diphosphate. It catalyses the reaction isopentenyldehydrorhodopin + dimethylallyl diphosphate + H2O = dihydrobisanhydrobacterioruberin + diphosphate. The protein operates within carotenoid biosynthesis. Its function is as follows. Involved in the biosynthesis of the acyclic C50 carotenoid bacterioruberin (BR). Acts as a bifunctional elongase/hydratase that catalyzes the elongation of lycopene by attaching a C(5) isoprene unit at C-2, as well as the hydroxylation of the previous end of the molecule. The enzyme acts at both ends of the substrate, and catalyzes the conversion of lycopene to the C(45) intermediate dihydroisopentenyldehydrorhodopin (DH-IDR) and the conversion of isopentenyldehydrorhodopin (IDR) to the C(50) carotenoid dihydrobisanhydrobacterioruberin (DH-BABR). Can also catalyze the conversion of lycopene to tetrahydrobisanhydrobacterioruberin (TH-BABR). The sequence is that of Lycopene elongase/hydratase from Haloferax volcanii (strain ATCC 29605 / DSM 3757 / JCM 8879 / NBRC 14742 / NCIMB 2012 / VKM B-1768 / DS2) (Halobacterium volcanii).